A 652-amino-acid chain; its full sequence is Cleavage and polyadenylation specificity factor subunit 6 (652 aa).

A disordered region spans residues 20–85 (QAQDEFGGDG…GVYHQSSGSL (66 aa)). The region spanning 93–173 (YQLYVGNLTW…QAPVVTYPSK (81 aa)) is the RRM domain. Disordered regions lie at residues 184–440 (KTRP…QQMG) and 518–652 (SYNR…RSRH). Over residues 187–203 (PVPPPQQNGPPRGPAPP) the composition is skewed to pro residues. Residues 205-223 (MGGGPMPTGHPGGPQGGGP) show a composition bias toward gly residues. Pro residues-rich tracts occupy residues 256-266 (SGPPRMQPPMH), 295-307 (GPRP…PPQR), and 338-352 (PQGP…PGPG). A compositionally biased stretch (low complexity) spans 391-406 (PGMNMPPQQGMNMTPQ). Residues 420 to 435 (GPWPPPQGKPPGPFPD) show a composition bias toward pro residues. Basic and acidic residues predominate over residues 518-528 (SYNRRERSRSR). A compositionally biased stretch (basic residues) spans 529–538 (ERSHRSRQRR). Residues 539 to 590 (ERSTSRYRERSRERERDRDRERERDGGSYRERSRSRERERQAPDHYRDDSRS) are compositionally biased toward basic and acidic residues. Phosphoserine is present on S596. A compositionally biased stretch (low complexity) spans 598 to 610 (EPVVAEAAEAPSS). Positions 612 to 652 (RYYEDRERYRSSDRERRDRDRDRDRERERDRDRREEHRSRH) are enriched in basic and acidic residues.

This sequence belongs to the RRM CPSF6/7 family.

Its subcellular location is the nucleus. Its function is as follows. May play a role in pre-mRNA 3'-processing. This chain is Cleavage and polyadenylation specificity factor subunit 6, found in Drosophila melanogaster (Fruit fly).